We begin with the raw amino-acid sequence, 346 residues long: S-adenosylmethionine:tRNA ribosyltransferase-isomerase (346 aa).

It belongs to the QueA family. As to quaternary structure, monomer.

The protein resides in the cytoplasm. The catalysed reaction is 7-aminomethyl-7-carbaguanosine(34) in tRNA + S-adenosyl-L-methionine = epoxyqueuosine(34) in tRNA + adenine + L-methionine + 2 H(+). The protein operates within tRNA modification; tRNA-queuosine biosynthesis. Transfers and isomerizes the ribose moiety from AdoMet to the 7-aminomethyl group of 7-deazaguanine (preQ1-tRNA) to give epoxyqueuosine (oQ-tRNA). This chain is S-adenosylmethionine:tRNA ribosyltransferase-isomerase, found in Lactococcus lactis subsp. cremoris (strain MG1363).